A 698-amino-acid chain; its full sequence is Protein artemis (698 aa).

Residue T380 is modified to Phosphothreonine. At S385 the chain carries Phosphoserine. Disordered regions lie at residues A445–V485, L505–S595, and N620–P669. Positions D449 to L461 are enriched in acidic residues. Residues L508–K521 are compositionally biased toward polar residues. Over residues T538–I551 the composition is skewed to low complexity. The segment covering T552–K583 has biased composition (polar residues). Positions T641 to D655 are enriched in low complexity. S650 bears the Phosphoserine; by ATM mark.

This sequence belongs to the DNA repair metallo-beta-lactamase (DRMBL) family. Interacts with LIG4; the interaction is direct. Interacts with ATM. Interacts with BRCA1. Interacts with PRKDC. Interacts with TP53BP1. Also exhibits ATM- and phosphorylation-dependent interaction with the MRN complex, composed of MRE11, RAD50, and NBN. In terms of processing, phosphorylation on undefined residues by PRKDC may stimulate endonucleolytic activity on 5' and 3' hairpins and overhangs. PRKDC must remain present, even after phosphorylation, for efficient hairpin opening. Also phosphorylated by ATM in response to ionizing radiation (IR) and by ATR in response to ultraviolet (UV) radiation.

It localises to the nucleus. Functionally, required for V(D)J recombination, the process by which exons encoding the antigen-binding domains of immunoglobulins and T-cell receptor proteins are assembled from individual V, (D), and J gene segments. V(D)J recombination is initiated by the lymphoid specific RAG endonuclease complex, which generates site specific DNA double strand breaks (DSBs). These DSBs present two types of DNA end structures: hairpin sealed coding ends and phosphorylated blunt signal ends. These ends are independently repaired by the non homologous end joining (NHEJ) pathway to form coding and signal joints respectively. This protein exhibits single-strand specific 5'-3' exonuclease activity in isolation, and acquires endonucleolytic activity on 5' and 3' hairpins and overhangs when in a complex with PRKDC. The latter activity is required specifically for the resolution of closed hairpins prior to the formation of the coding joint. May also be required for the repair of complex DSBs induced by ionizing radiation, which require substantial end-processing prior to religation by NHEJ. In Rattus norvegicus (Rat), this protein is Protein artemis (Dclre1c).